The sequence spans 97 residues: Conotoxin Cal6.1e (97 aa).

A signal peptide spans Met1–Thr22. A disordered region spans residues Asp23–Ile49. A propeptide spanning residues Asp23–Met60 is cleaved from the precursor. Residues Asn31–Ser45 are compositionally biased toward polar residues. 3 disulfides stabilise this stretch: Cys71–Cys87, Cys78–Cys91, and Cys86–Cys96.

This sequence belongs to the conotoxin O1 superfamily. Expressed by the venom duct.

The protein localises to the secreted. In terms of biological role, probable neurotoxin with unknown target. Possibly targets ion channels. In Californiconus californicus (California cone), this protein is Conotoxin Cal6.1e.